A 376-amino-acid chain; its full sequence is Glutamate 5-kinase (376 aa).

ATP is bound at residue Lys-15. 3 residues coordinate substrate: Ser-56, Asp-143, and Asn-155. Residue 175 to 176 (SD) participates in ATP binding. Residues 281–358 (KGTLTIDAGA…PDVMSILGIT (78 aa)) form the PUA domain.

The protein belongs to the glutamate 5-kinase family.

It is found in the cytoplasm. It catalyses the reaction L-glutamate + ATP = L-glutamyl 5-phosphate + ADP. It participates in amino-acid biosynthesis; L-proline biosynthesis; L-glutamate 5-semialdehyde from L-glutamate: step 1/2. In terms of biological role, catalyzes the transfer of a phosphate group to glutamate to form L-glutamate 5-phosphate. The polypeptide is Glutamate 5-kinase (Rhodopseudomonas palustris (strain BisB18)).